Here is a 557-residue protein sequence, read N- to C-terminus: Dihydroxy-acid dehydratase (557 aa).

Residue C49 coordinates [2Fe-2S] cluster. D81 is a Mg(2+) binding site. Position 122 (C122) interacts with [2Fe-2S] cluster. Residues D123 and K124 each coordinate Mg(2+). K124 is modified (N6-carboxylysine). C194 contributes to the [2Fe-2S] cluster binding site. E446 serves as a coordination point for Mg(2+). S472 (proton acceptor) is an active-site residue.

It belongs to the IlvD/Edd family. Homodimer. The cofactor is [2Fe-2S] cluster. It depends on Mg(2+) as a cofactor.

The enzyme catalyses (2R)-2,3-dihydroxy-3-methylbutanoate = 3-methyl-2-oxobutanoate + H2O. The catalysed reaction is (2R,3R)-2,3-dihydroxy-3-methylpentanoate = (S)-3-methyl-2-oxopentanoate + H2O. Its pathway is amino-acid biosynthesis; L-isoleucine biosynthesis; L-isoleucine from 2-oxobutanoate: step 3/4. The protein operates within amino-acid biosynthesis; L-valine biosynthesis; L-valine from pyruvate: step 3/4. Functionally, functions in the biosynthesis of branched-chain amino acids. Catalyzes the dehydration of (2R,3R)-2,3-dihydroxy-3-methylpentanoate (2,3-dihydroxy-3-methylvalerate) into 2-oxo-3-methylpentanoate (2-oxo-3-methylvalerate) and of (2R)-2,3-dihydroxy-3-methylbutanoate (2,3-dihydroxyisovalerate) into 2-oxo-3-methylbutanoate (2-oxoisovalerate), the penultimate precursor to L-isoleucine and L-valine, respectively. The chain is Dihydroxy-acid dehydratase from Prochlorococcus marinus (strain MIT 9312).